The following is a 59-amino-acid chain: Large ribosomal subunit protein bL32 (59 aa).

Residues 1-16 (MAVPKRKTSPSRRGMR) are compositionally biased toward basic residues. A disordered region spans residues 1–59 (MAVPKRKTSPSRRGMRRSADALKAPTYVEDKNSGELRRPHHIDLKSGMYRGRQVLEPKE). Positions 28–44 (VEDKNSGELRRPHHIDL) are enriched in basic and acidic residues.

This sequence belongs to the bacterial ribosomal protein bL32 family.

The protein is Large ribosomal subunit protein bL32 of Brucella abortus (strain S19).